The sequence spans 181 residues: ATP synthase subunit delta (181 aa).

It belongs to the ATPase delta chain family. F-type ATPases have 2 components, F(1) - the catalytic core - and F(0) - the membrane proton channel. F(1) has five subunits: alpha(3), beta(3), gamma(1), delta(1), epsilon(1). CF(0) has four main subunits: a(1), b(1), b'(1) and c(10-14). The alpha and beta chains form an alternating ring which encloses part of the gamma chain. F(1) is attached to F(0) by a central stalk formed by the gamma and epsilon chains, while a peripheral stalk is formed by the delta, b and b' chains.

The protein localises to the cellular thylakoid membrane. In terms of biological role, f(1)F(0) ATP synthase produces ATP from ADP in the presence of a proton or sodium gradient. F-type ATPases consist of two structural domains, F(1) containing the extramembraneous catalytic core and F(0) containing the membrane proton channel, linked together by a central stalk and a peripheral stalk. During catalysis, ATP synthesis in the catalytic domain of F(1) is coupled via a rotary mechanism of the central stalk subunits to proton translocation. Functionally, this protein is part of the stalk that links CF(0) to CF(1). It either transmits conformational changes from CF(0) to CF(1) or is implicated in proton conduction. This is ATP synthase subunit delta from Synechococcus sp. (strain RCC307).